The sequence spans 349 residues: Nicotinate-nucleotide--dimethylbenzimidazole phosphoribosyltransferase (349 aa).

The Proton acceptor role is filled by E318.

Belongs to the CobT family.

It carries out the reaction 5,6-dimethylbenzimidazole + nicotinate beta-D-ribonucleotide = alpha-ribazole 5'-phosphate + nicotinate + H(+). Its pathway is nucleoside biosynthesis; alpha-ribazole biosynthesis; alpha-ribazole from 5,6-dimethylbenzimidazole: step 1/2. Catalyzes the synthesis of alpha-ribazole-5'-phosphate from nicotinate mononucleotide (NAMN) and 5,6-dimethylbenzimidazole (DMB). The protein is Nicotinate-nucleotide--dimethylbenzimidazole phosphoribosyltransferase of Geobacter sp. (strain M21).